A 181-amino-acid chain; its full sequence is Urease accessory protein UreE (181 aa).

Residues 143 to 181 (FDPEPGAYNQAGQGHSHGHSHGHSHNHDHEHSHGHKHAH) are disordered.

Belongs to the UreE family.

It is found in the cytoplasm. In terms of biological role, involved in urease metallocenter assembly. Binds nickel. Probably functions as a nickel donor during metallocenter assembly. This Marinobacter nauticus (strain ATCC 700491 / DSM 11845 / VT8) (Marinobacter aquaeolei) protein is Urease accessory protein UreE.